The following is a 35-amino-acid chain: Beta/delta-theraphotoxin-Pre1a (35 aa).

Cystine bridges form between Cys-3–Cys-18, Cys-10–Cys-23, and Cys-17–Cys-30.

It belongs to the neurotoxin 10 (Hwtx-1) family. In terms of tissue distribution, expressed by the venom gland.

Its subcellular location is the secreted. Its function is as follows. Gating-modifier toxin that both inhibits the peak current of human Nav1.1/SCN1A, rat Nav1.2/SCN2A, human Nav1.6/SCN8A, and human Nav1.7/SCN9A and concurrently inhibits fast inactivation of human Nav1.1 and rat Nav1.3/SCN3A. The relative rank order potency for Nav modulation is Nav1.3 (inactivation EC(50)=45 nM) &gt; Nav1.7 &gt; Nav1.2 &gt; Nav1.1 (inactivation) &gt; Nav1.1 &gt; Nav1.6 &gt; Nav1.3 (IC(50)=8 uM). The DII and DIV S3-S4 loops of Nav channel voltage sensors are important for the interaction of this toxin with Nav channels but cannot account for its unique subtype selectivity. It is the variability of the S1-S2 loops between NaV channels which contributes substantially to the selectivity profile observed for this toxin, particularly with regards to fast inactivation. This toxin may bind the channel in the resting state. The chain is Beta/delta-theraphotoxin-Pre1a from Psalmopoeus reduncus (Costa Rican orangemouth tarantula).